Consider the following 205-residue polypeptide: Non-specific lipid transfer protein GPI-anchored 13 (205 aa).

The signal sequence occupies residues 1–24 (MESRKIKVMATAIALIMVAMVVDA). Cystine bridges form between C36-C77, C46-C61, C62-C104, and C75-C113. 3 N-linked (GlcNAc...) asparagine glycosylation sites follow: N93, N137, and N165. The disordered stretch occupies residues 141 to 176 (SASAPTGSASEPTSMSSTPGSSAGNNSGRTTSVPGT). A lipid anchor (GPI-anchor amidated asparagine) is attached at N177. Positions 178–205 (HAQSFSKQWLGLEVVAHFFVIFYIFILV) are cleaved as a propeptide — removed in mature form.

It belongs to the plant LTP family. In terms of tissue distribution, expressed preferentially in expanding leaves and sepals, restricted to the distal side. Expressed at low levels in roots and stems.

The protein localises to the cell membrane. In terms of biological role, probable lipid transfer protein. The chain is Non-specific lipid transfer protein GPI-anchored 13 from Arabidopsis thaliana (Mouse-ear cress).